The chain runs to 323 residues: Sphingolipid delta(4)-desaturase DES1 (323 aa).

G2 carries N-myristoyl glycine lipidation. 2 helical membrane-spanning segments follow: residues 41-61 (PNLI…FYLV) and 68-88 (WLMF…TLAI). The Histidine box-1 motif lies at 89–93 (HEISH). Residues 104-124 (WNRWFGMFANLSLGVPYSISF) form a helical membrane-spanning segment. The Histidine box-2 motif lies at 128 to 132 (HMDHH). 3 consecutive transmembrane segments (helical) span residues 152–172 (FFCT…FYAF), 184–204 (HLEV…YYVF), and 210–230 (VYML…GHFI). Residues 259-263 (HNEHH) carry the Histidine box-3 motif. At S307 the chain carries Phosphoserine.

It belongs to the fatty acid desaturase type 1 family. DEGS subfamily. In terms of assembly, interacts with RLBP1; the interaction increases synthesis of chromophore-precursors by DEGS1. Post-translationally, myristoylation can target the enzyme to the mitochondria leading to an increase in ceramide levels.

Its subcellular location is the mitochondrion membrane. It localises to the endoplasmic reticulum membrane. The catalysed reaction is an N-acylsphinganine + 2 Fe(II)-[cytochrome b5] + O2 + 2 H(+) = an N-acylsphing-4-enine + 2 Fe(III)-[cytochrome b5] + 2 H2O. The enzyme catalyses all-trans-retinol = 11-cis-retinol. It carries out the reaction all-trans-retinol = 9-cis-retinol. It catalyses the reaction all-trans-retinol = 13-cis-retinol. The catalysed reaction is 11-cis-retinol = 13-cis-retinol. The enzyme catalyses 11-cis-retinol = 9-cis-retinol. Functionally, has sphingolipid-delta-4-desaturase activity. Converts D-erythro-sphinganine to D-erythro-sphingosine (E-sphing-4-enine). Catalyzes the equilibrium isomerization of retinols. This is Sphingolipid delta(4)-desaturase DES1 from Rattus norvegicus (Rat).